The chain runs to 264 residues: UPF0162 protein PM0557 (264 aa).

It belongs to the UPF0162 family.

This chain is UPF0162 protein PM0557, found in Pasteurella multocida (strain Pm70).